The sequence spans 588 residues: Aspartate--tRNA ligase (588 aa).

Glu-174 lines the L-aspartate pocket. Residues 198–201 (QLFK) form an aspartate region. Arg-220 is an L-aspartate binding site. ATP contacts are provided by residues 220-222 (RDE) and Gln-229. His-448 contributes to the L-aspartate binding site. An ATP-binding site is contributed by Glu-482. Position 489 (Arg-489) interacts with L-aspartate. 534 to 537 (GIDR) serves as a coordination point for ATP.

The protein belongs to the class-II aminoacyl-tRNA synthetase family. Type 1 subfamily. Homodimer.

Its subcellular location is the cytoplasm. The catalysed reaction is tRNA(Asp) + L-aspartate + ATP = L-aspartyl-tRNA(Asp) + AMP + diphosphate. In terms of biological role, catalyzes the attachment of L-aspartate to tRNA(Asp) in a two-step reaction: L-aspartate is first activated by ATP to form Asp-AMP and then transferred to the acceptor end of tRNA(Asp). This Xanthomonas campestris pv. campestris (strain 8004) protein is Aspartate--tRNA ligase.